Reading from the N-terminus, the 254-residue chain is MSPFSSAFRPRRIAISALLLAIGALASGCSSIDRLSQIGEQPKLSAIDNPTAQPGYKPVQMPMPKPEVASYNPNSLWRSGSRAFFKDQRAHQIGDLLTVTVNITDKANIANETQRSRTAKEDSGITDFIGSQTVTQPLKVLPGRLLTTDSTSSADGKGSVNRQEALQTNVAAVVTQVLPNGNLVVEGKQEIRVNYEIRELVVAGIVRPEDIQSDNTIDSSKIAQARIAYGGRGQIMDVQQPRYGQQVMDVLLPF.

Positions 1–26 (MSPFSSAFRPRRIAISALLLAIGALA) are cleaved as a signal peptide.

Belongs to the FlgH family. As to quaternary structure, the basal body constitutes a major portion of the flagellar organelle and consists of four rings (L,P,S, and M) mounted on a central rod.

It localises to the cell outer membrane. It is found in the bacterial flagellum basal body. Functionally, assembles around the rod to form the L-ring and probably protects the motor/basal body from shearing forces during rotation. The polypeptide is Flagellar L-ring protein 1 (flgH1) (Bradyrhizobium diazoefficiens (strain JCM 10833 / BCRC 13528 / IAM 13628 / NBRC 14792 / USDA 110)).